Consider the following 675-residue polypeptide: tRNA 5-methylaminomethyl-2-thiouridine biosynthesis bifunctional protein MnmC (675 aa).

The tRNA (mnm(5)s(2)U34)-methyltransferase stretch occupies residues 1–245; the sequence is MANLPIQHAS…KREMLSGLLP (245 aa). The tract at residues 271–675 is FAD-dependent cmnm(5)s(2)U34 oxidoreductase; it reads IGGGIASVLT…LLKGKPVTHD (405 aa).

The protein in the N-terminal section; belongs to the methyltransferase superfamily. tRNA (mnm(5)s(2)U34)-methyltransferase family. This sequence in the C-terminal section; belongs to the DAO family. FAD is required as a cofactor.

Its subcellular location is the cytoplasm. It catalyses the reaction 5-aminomethyl-2-thiouridine(34) in tRNA + S-adenosyl-L-methionine = 5-methylaminomethyl-2-thiouridine(34) in tRNA + S-adenosyl-L-homocysteine + H(+). In terms of biological role, catalyzes the last two steps in the biosynthesis of 5-methylaminomethyl-2-thiouridine (mnm(5)s(2)U) at the wobble position (U34) in tRNA. Catalyzes the FAD-dependent demodification of cmnm(5)s(2)U34 to nm(5)s(2)U34, followed by the transfer of a methyl group from S-adenosyl-L-methionine to nm(5)s(2)U34, to form mnm(5)s(2)U34. The protein is tRNA 5-methylaminomethyl-2-thiouridine biosynthesis bifunctional protein MnmC of Pectobacterium atrosepticum (strain SCRI 1043 / ATCC BAA-672) (Erwinia carotovora subsp. atroseptica).